The primary structure comprises 170 residues: Mitotic-spindle organizing protein 2B (170 aa).

Disordered stretches follow at residues 1 to 26 (MSRG…SPDA) and 102 to 170 (SADS…GSST). The span at 8–20 (GSQAMASSQAAGP) shows a compositional bias: low complexity. The span at 123–132 (PNPTTSTTQG) shows a compositional bias: polar residues. Positions 151 to 170 (SGSRMQKSSSSGKSSGGSST) are enriched in low complexity.

Belongs to the MOZART2 family. As to quaternary structure, part of the gamma-tubulin complex. Interacts with TUBG1.

The protein resides in the cytoplasm. Its subcellular location is the cytoskeleton. The protein localises to the microtubule organizing center. It localises to the centrosome. It is found in the spindle. The polypeptide is Mitotic-spindle organizing protein 2B (mzt2b) (Xenopus tropicalis (Western clawed frog)).